Consider the following 691-residue polypeptide: DNA ligase (691 aa).

Residues Asp41–Asp45, Ser90–Leu91, and Glu130 each bind NAD(+). The active-site N6-AMP-lysine intermediate is Lys132. The NAD(+) site is built by Arg153, Glu190, Lys307, and Lys331. Zn(2+)-binding residues include Cys425, Cys428, Cys443, and Cys449. In terms of domain architecture, BRCT spans Ala610 to Arg691.

Belongs to the NAD-dependent DNA ligase family. LigA subfamily. Mg(2+) serves as cofactor. Requires Mn(2+) as cofactor.

It carries out the reaction NAD(+) + (deoxyribonucleotide)n-3'-hydroxyl + 5'-phospho-(deoxyribonucleotide)m = (deoxyribonucleotide)n+m + AMP + beta-nicotinamide D-nucleotide.. In terms of biological role, DNA ligase that catalyzes the formation of phosphodiester linkages between 5'-phosphoryl and 3'-hydroxyl groups in double-stranded DNA using NAD as a coenzyme and as the energy source for the reaction. It is essential for DNA replication and repair of damaged DNA. The polypeptide is DNA ligase (Burkholderia pseudomallei (strain 668)).